The primary structure comprises 729 residues: Serine/threonine-protein kinase TBK1 (729 aa).

The region spanning 9-310 (WLLSDILGQG…ETSDILHRMV (302 aa)) is the Protein kinase domain. 15–23 (LGQGATANV) contributes to the ATP binding site. Lys30 is covalently cross-linked (Glycyl lysine isopeptide (Lys-Gly) (interchain with G-Cter in ubiquitin)). ATP is bound at residue Lys38. The active-site Proton acceptor is Asp135. Ser172 is subject to Phosphoserine; by autocatalysis and IKKB. A Ubiquitin-like domain is found at 309–385 (MVIHVFSLQQ…ENPIFVVSRE (77 aa)). Residue Lys401 forms a Glycyl lysine isopeptide (Lys-Gly) (interchain with G-Cter in ubiquitin) linkage. Coiled-coil stretches lie at residues 407–657 (DLDG…LQET) and 658–713 (LPQK…ILER). Lys607 carries the N6-methyllysine; by SETD4 modification. An interaction with AZI2, TANK and TBKBP1 region spans residues 621–729 (RKMLHLRKQL…DGGLRNVDCL (109 aa)). Residue Lys670 forms a Glycyl lysine isopeptide (Lys-Gly) (interchain with G-Cter in ubiquitin) linkage. Ser716 bears the Phosphoserine mark.

This sequence belongs to the protein kinase superfamily. Ser/Thr protein kinase family. I-kappa-B kinase subfamily. Homodimer. Interacts with DDX3X, TIRAP and TRAF2. Part of a ternary complex consisting of TANK, TRAF2 and TBK1. Interacts with AZI2, TANK and TBKBP1; these interactions are mutually exclusive and mediate TBK1 activation. Interacts with GSK3B; this interaction promotes TBK1 self-association and autophosphorylation. Interacts with SIKE1; SIKE1 is associated with TBK1 under physiological condition and dissociated from TBK1 upon viral infection or TLR3 stimulation. Interacts with IRF3, leading to IRF3 phosphorylation. Interacts with RIGI. Interacts with CYLD. Interacts with OPTN and TRAF3. Interacts with SRC. Interacts with the exocyst complex subunit SEC5/EXOC2; this interaction is sufficient to trigger TBK1 activity. Interacts with STING1, leading to STING1 phosphorylation. Interacts with IFIT3 (via N-terminus). Interacts with MAVS; interaction only takes place in the presence of IFIT3 and leads to MAVS phosphorylation. Interacts (via protein kinase domain) with TTLL12 (via TTL domain); the interaction prevents MAVS binding to TBK1. Interacts with TICAM1; this interaction is enhanced in the presence of WDFY1 and leads to TICAM1 phosphorylation. Interacts with TRIM26. Interacts with TRIM23. Interacts with TTC4 and IKBKE. Interacts with HNRNPA2B1. Interacts with DDX3X. Interacts with TRIM14. Interacts with CEP170; efficient complex formation may be dependent on the presence of CCDC61. Interacts with TRAF3IP3. Interacts with HSP90AA1; the interaction mediates TBK1 association with TOMM70. Interacts with TAX1BP1. Interacts with kinase IKBKB; the complex interacts with STAT1, leading to phosphorylation of STAT1 on 'Thr-749' by IKBKB. Interacts with ICOS; this interaction is critical for the maturation of T follicular regulatory cells. Interacts with RNF144B; this interaction prevents TBK1 phosphorylation and subsequent activation. Interacts with ASB8; this interaction promotes TBK1 proteasomal degradation. Forms a ternary complex with ZNF268 and SETD4; the interaction with SETD4 is ZNF268-dependent and leads to TBK1 monomethylation, which enhances its interaction with IRF3 and MAVS. In terms of assembly, (Microbial infection) Interacts with Borna disease virus (BDV) P protein leading to its phosphorylation. As to quaternary structure, (Microbial infection) Interacts with Ebola virus protein VP35. (Microbial infection) Interacts with HCV NS3; this interaction leads to inhibition of cellular antiviral response by blocking necessary interactions between the TBK1 and its substrates IRF3 and IRF7. In terms of assembly, (Microbial infection) Interacts with human herpesvirus 1 protein ICP34.5. As to quaternary structure, (Microbial infection) Interacts with Zika virus non-structural protein 1/NS1 and non-structural protein 4B/NS4B. (Microbial infection) Interacts with SARS-CoV-2 non-structural protein 6; this interaction decreases IRF3 phosphorylation by 57%, which leads to reduced IFN-beta (IFNB) production. Interacts with SARS-CoV-2 helicase; this interaction inhibits TBK1 phosphorylation and decreases IRF3 phosphorylation by 75%, which leads to reduced IFN-beta production. Interacts with SARS-CoV-2 M protein; the interaction promotes TBK1 degradation via 'Lys-48'-linked ubiquitination. In terms of assembly, (Microbial infection) Interacts with human cytomegalovirus protein UL35; this interaction inhibits type I interferon production. As to quaternary structure, (Microbial infection) Interacts with heartland virus NSs; this interaction antagonizes TBK1 phosphorylation and inhibits TBK1-IRF3 interaction and thus the establishment of an antiviral state. (Microbial infection) Interacts (via N-terminus) with Severe fever with thrombocytopenia virus (SFTSV) NSs; this interaction antagonizes TBK1 phosphorylation and sequesters TBK1 in NSs-induced cytoplasmic inclusion bodies thereby inhibiting the IFN responses. Post-translationally, autophosphorylation at Ser-172 activates the kinase, and is an essential step for virus-triggered signaling. Phosphorylated by IKBKB/IKKB at Ser-172. Phosphorylation requires homodimerization and ubiquitination at Lys-30 and Lys-401. Dephosphorylated at Ser-172 by PPM1B and this negatively regulates its role in mediating antiviral response. In terms of processing, 'Lys-63'-linked polyubiquitination by MIB1 after RNA virus infection, or by NRDP1 after LPS stimulation at Lys-30 and Lys-401, participates in kinase activation. 'Lys-48'-linked polyubiquitination at Lys-670 by DTX4 leads to proteasomal degradation. 'Lys-48'-linked polyubiquitination by TRAIP also leads to proteasomal degradation. 'Lys-48'-linked polyubiquitination by TRAF7; leading to proteasomal degradation. 'Lys-63'-linked polyubiquitination by RNF128 at Lys-30 and Lys-401 leads to the activation of antiviral responses. 'Lys-48'-linked polyubiquitination after 'lys-33'-linked deubiquitination by USP38 promotes TBK1 degradation. (Microbial infection) Interaction with SARS-CoV-2 M protein induces 'Lys-48'-linked ubiquitination which leads to proteasomal degradation. Post-translationally, (Microbial infection) Deubiquitinated by Epstein-Barr virus BPLF1 on both 'Lys-48' and 'Lys-63'-linked ubiquitin chains; leading to inhibition of type I interfewron production. In terms of processing, monomethylation at Lys-607 by SETD4 maximizes TBK1 activation and promotes efficient interferon signaling. As to expression, ubiquitous with higher expression in testis. Expressed in the ganglion cells, nerve fiber layer and microvasculature of the retina.

It is found in the cytoplasm. It catalyses the reaction L-seryl-[protein] + ATP = O-phospho-L-seryl-[protein] + ADP + H(+). The catalysed reaction is L-threonyl-[protein] + ATP = O-phospho-L-threonyl-[protein] + ADP + H(+). Its function is as follows. Serine/threonine kinase that plays an essential role in regulating inflammatory responses to foreign agents. Following activation of toll-like receptors by viral or bacterial components, associates with TRAF3 and TANK and phosphorylates interferon regulatory factors (IRFs) IRF3 and IRF7 as well as DDX3X. This activity allows subsequent homodimerization and nuclear translocation of the IRFs leading to transcriptional activation of pro-inflammatory and antiviral genes including IFNA and IFNB. In order to establish such an antiviral state, TBK1 form several different complexes whose composition depends on the type of cell and cellular stimuli. Plays a key role in IRF3 activation: acts by first phosphorylating innate adapter proteins MAVS, STING1 and TICAM1 on their pLxIS motif, leading to recruitment of IRF3, thereby licensing IRF3 for phosphorylation by TBK1. Phosphorylated IRF3 dissociates from the adapter proteins, dimerizes, and then enters the nucleus to induce expression of interferons. Thus, several scaffolding molecules including FADD, TRADD, MAVS, AZI2, TANK or TBKBP1/SINTBAD can be recruited to the TBK1-containing-complexes. Under particular conditions, functions as a NF-kappa-B effector by phosphorylating NF-kappa-B inhibitor alpha/NFKBIA, IKBKB or RELA to translocate NF-Kappa-B to the nucleus. Restricts bacterial proliferation by phosphorylating the autophagy receptor OPTN/Optineurin on 'Ser-177', thus enhancing LC3 binding affinity and antibacterial autophagy. Phosphorylates SMCR8 component of the C9orf72-SMCR8 complex, promoting autophagosome maturation. Phosphorylates ATG8 proteins MAP1LC3C and GABARAPL2, thereby preventing their delipidation and premature removal from nascent autophagosomes. Seems to play a role in energy balance regulation by sustaining a state of chronic, low-grade inflammation in obesity, which leads to a negative impact on insulin sensitivity. Attenuates retroviral budding by phosphorylating the endosomal sorting complex required for transport-I (ESCRT-I) subunit VPS37C. Phosphorylates Borna disease virus (BDV) P protein. Plays an essential role in the TLR3- and IFN-dependent control of herpes virus HSV-1 and HSV-2 infections in the central nervous system. Acts both as a positive and negative regulator of the mTORC1 complex, depending on the context: activates mTORC1 in response to growth factors by catalyzing phosphorylation of MTOR, while it limits the mTORC1 complex by promoting phosphorylation of RPTOR. Acts as a positive regulator of the mTORC2 complex by mediating phosphorylation of MTOR, leading to increased phosphorylation and activation of AKT1. Phosphorylates and activates AKT1. Involved in the regulation of TNF-induced RIPK1-mediated cell death, probably acting via CYLD phosphorylation that in turn controls RIPK1 ubiquitination status. Also participates in the differentiation of T follicular regulatory cells together with the receptor ICOS. In Homo sapiens (Human), this protein is Serine/threonine-protein kinase TBK1.